The sequence spans 932 residues: ER degradation-enhancing alpha-mannosidase-like protein 3 (932 aa).

The N-terminal stretch at 1–41 (MSEAGGRGCGSPVPQRARWRLVAATAAFCLVSATSVWTAGA) is a signal peptide. N-linked (GlcNAc...) asparagine glycosylation is present at Asn118. Catalysis depends on Glu146, which acts as the Proton donor. Asn195 carries an N-linked (GlcNAc...) asparagine glycan. Residue Asp293 is part of the active site. The active-site Proton donor is Glu387. Glu405 is an active-site residue. Thr491 serves as a coordination point for Ca(2+). N-linked (GlcNAc...) asparagine glycans are attached at residues Asn504 and Asn511. Positions 674–779 (LSKHKETRGF…KEGSIILDAI (106 aa)) constitute a PA domain. Over residues 790–799 (SDKAKDRDPE) the composition is skewed to basic and acidic residues. The disordered stretch occupies residues 790 to 908 (SDKAKDRDPE…PNVSWGKKVQ (119 aa)). Residues Asn810 and Asn814 are each glycosylated (N-linked (GlcNAc...) asparagine). Positions 812–825 (SQNQSGEQISSSSQ) are enriched in low complexity. Polar residues predominate over residues 856 to 890 (ASISPSEQTSNPTENHETTNLNGECTDLDNQLQEQ). N-linked (GlcNAc...) asparagine glycosylation occurs at Asn900. The Prevents secretion from ER motif lies at 929 to 932 (KDEL).

The protein belongs to the glycosyl hydrolase 47 family. The cofactor is Ca(2+).

It localises to the endoplasmic reticulum lumen. It carries out the reaction N(4)-(alpha-D-Man-(1-&gt;2)-alpha-D-Man-(1-&gt;2)-alpha-D-Man-(1-&gt;3)-[alpha-D-Man-(1-&gt;2)-alpha-D-Man-(1-&gt;3)-[alpha-D-Man-(1-&gt;2)-alpha-D-Man-(1-&gt;6)]-alpha-D-Man-(1-&gt;6)]-beta-D-Man-(1-&gt;4)-beta-D-GlcNAc-(1-&gt;4)-beta-D-GlcNAc)-L-asparaginyl-[protein] (N-glucan mannose isomer 9A1,2,3B1,2,3) + 4 H2O = N(4)-(alpha-D-Man-(1-&gt;3)-[alpha-D-Man-(1-&gt;3)-[alpha-D-Man-(1-&gt;6)]-alpha-D-Man-(1-&gt;6)]-beta-D-Man-(1-&gt;4)-beta-D-GlcNAc-(1-&gt;4)-beta-D-GlcNAc)-L-asparaginyl-[protein] (N-glucan mannose isomer 5A1,2) + 4 beta-D-mannose. It catalyses the reaction N(4)-(alpha-D-Man-(1-&gt;2)-alpha-D-Man-(1-&gt;2)-alpha-D-Man-(1-&gt;3)-[alpha-D-Man-(1-&gt;3)-[alpha-D-Man-(1-&gt;2)-alpha-D-Man-(1-&gt;6)]-alpha-D-Man-(1-&gt;6)]-beta-D-Man-(1-&gt;4)-beta-D-GlcNAc-(1-&gt;4)-beta-D-GlcNAc)-L-asparaginyl-[protein] (N-glucan mannose isomer 8A1,2,3B1,3) + 3 H2O = N(4)-(alpha-D-Man-(1-&gt;3)-[alpha-D-Man-(1-&gt;3)-[alpha-D-Man-(1-&gt;6)]-alpha-D-Man-(1-&gt;6)]-beta-D-Man-(1-&gt;4)-beta-D-GlcNAc-(1-&gt;4)-beta-D-GlcNAc)-L-asparaginyl-[protein] (N-glucan mannose isomer 5A1,2) + 3 beta-D-mannose. Its pathway is protein modification; protein glycosylation. In terms of biological role, involved in endoplasmic reticulum-associated degradation (ERAD). Accelerates the glycoprotein ERAD by proteasomes, by catalyzing mannose trimming from Man8GlcNAc2 to Man7GlcNAc2 in the N-glycans. May also participate in mannose trimming from all glycoproteins and not just misfolded ones targeted to ERAD. May have alpha 1,2-mannosidase activity. The sequence is that of ER degradation-enhancing alpha-mannosidase-like protein 3 (EDEM3) from Homo sapiens (Human).